A 413-amino-acid polypeptide reads, in one-letter code: Glucose-1-phosphate adenylyltransferase (413 aa).

Residues Tyr-102, Gly-167, 182–183, and Ser-200 contribute to the alpha-D-glucose 1-phosphate site; that span reads EK.

The protein belongs to the bacterial/plant glucose-1-phosphate adenylyltransferase family. In terms of assembly, homotetramer.

The enzyme catalyses alpha-D-glucose 1-phosphate + ATP + H(+) = ADP-alpha-D-glucose + diphosphate. It functions in the pathway glycan biosynthesis; glycogen biosynthesis. In terms of biological role, involved in the biosynthesis of ADP-glucose, a building block required for the elongation reactions to produce glycogen. Catalyzes the reaction between ATP and alpha-D-glucose 1-phosphate (G1P) to produce pyrophosphate and ADP-Glc. This is Glucose-1-phosphate adenylyltransferase from Deinococcus radiodurans (strain ATCC 13939 / DSM 20539 / JCM 16871 / CCUG 27074 / LMG 4051 / NBRC 15346 / NCIMB 9279 / VKM B-1422 / R1).